Here is a 214-residue protein sequence, read N- to C-terminus: N-(5'-phosphoribosyl)anthranilate isomerase (214 aa).

It belongs to the TrpF family.

The enzyme catalyses N-(5-phospho-beta-D-ribosyl)anthranilate = 1-(2-carboxyphenylamino)-1-deoxy-D-ribulose 5-phosphate. It functions in the pathway amino-acid biosynthesis; L-tryptophan biosynthesis; L-tryptophan from chorismate: step 3/5. This chain is N-(5'-phosphoribosyl)anthranilate isomerase, found in Haloarcula marismortui (strain ATCC 43049 / DSM 3752 / JCM 8966 / VKM B-1809) (Halobacterium marismortui).